We begin with the raw amino-acid sequence, 129 residues long: Small ribosomal subunit protein uS11 (129 aa).

The protein belongs to the universal ribosomal protein uS11 family. In terms of assembly, part of the 30S ribosomal subunit. Interacts with proteins S7 and S18. Binds to IF-3.

Its function is as follows. Located on the platform of the 30S subunit, it bridges several disparate RNA helices of the 16S rRNA. Forms part of the Shine-Dalgarno cleft in the 70S ribosome. This chain is Small ribosomal subunit protein uS11, found in Bartonella tribocorum (strain CIP 105476 / IBS 506).